We begin with the raw amino-acid sequence, 118 residues long: Small ribosomal subunit protein uS13 (118 aa).

Residues 92-118 form a disordered region; it reads RRGLPVRGQRTKTNARTRKGPRKPIKK.

The protein belongs to the universal ribosomal protein uS13 family. As to quaternary structure, part of the 30S ribosomal subunit. Forms a loose heterodimer with protein S19. Forms two bridges to the 50S subunit in the 70S ribosome.

In terms of biological role, located at the top of the head of the 30S subunit, it contacts several helices of the 16S rRNA. In the 70S ribosome it contacts the 23S rRNA (bridge B1a) and protein L5 of the 50S subunit (bridge B1b), connecting the 2 subunits; these bridges are implicated in subunit movement. Contacts the tRNAs in the A and P-sites. The chain is Small ribosomal subunit protein uS13 from Yersinia enterocolitica serotype O:8 / biotype 1B (strain NCTC 13174 / 8081).